The sequence spans 253 residues: Adenylate kinase (253 aa).

Glycine 15–threonine 20 lines the ATP pocket. Residues serine 35 to leucine 64 are NMP. AMP-binding positions include serine 36, arginine 41, lysine 62–leucine 64, glycine 103–arginine 106, and glutamine 110. Positions serine 143 to aspartate 176 are LID. Arginine 144 is an ATP binding site. Cysteine 147 and cysteine 150 together coordinate Zn(2+). An ATP-binding site is contributed by isoleucine 153–tyrosine 154. The Zn(2+) site is built by cysteine 163 and cysteine 166. AMP is bound by residues arginine 173 and arginine 184. Alanine 212 contributes to the ATP binding site.

The protein belongs to the adenylate kinase family. As to quaternary structure, monomer.

The protein localises to the cytoplasm. It catalyses the reaction AMP + ATP = 2 ADP. The protein operates within purine metabolism; AMP biosynthesis via salvage pathway; AMP from ADP: step 1/1. In terms of biological role, catalyzes the reversible transfer of the terminal phosphate group between ATP and AMP. Plays an important role in cellular energy homeostasis and in adenine nucleotide metabolism. This Chlamydia muridarum (strain MoPn / Nigg) protein is Adenylate kinase.